Consider the following 369-residue polypeptide: MWCLERLRLGPECLRRSGDWLLPGRARGAKSRTTAACANVLTPDRIPEFCIPPRLMPRLALAALRNSWVEEAGMDEGAGRTDWDPRSQAALSLPHLPRVRTAYGFCALLESPHTRRKESLLLGGPPAPRPRAHTYGGGGGPDALLGTLRVPRAPGPATPAAPGCPRPPQDALARRPRGCRLLRVPDGLLSRALRAGRSRRLTRVRSVSSGNEDKERRAGSQSPARAPSTSPPSSRVPFPERLEAEGTVALGRAGDALRLAAEYCPGTGRLRLRLLRAESPAGGAPGPRAVSCRLSLVLRPPGTALRQCSTVVGRSRKASFDQDFCFDGLSEDEVRRLAVRVKARDEGRGRERGRLLGQGELSLGALLLL.

Disordered regions lie at residues 151 to 176 and 197 to 240; these read PRAPGPATPAAPGCPRPPQDALARRP and RSRR…PFPE. The segment covering 153–168 has biased composition (pro residues); it reads APGPATPAAPGCPRPP. Low complexity predominate over residues 220–237; that stretch reads SQSPARAPSTSPPSSRVP. The region spanning 253 to 369 is the C2 domain; sequence AGDALRLAAE…ELSLGALLLL (117 aa).

Belongs to the C2CD4 family. Specifically expressed in endothelial cells.

It localises to the nucleus. In terms of biological role, may be involved in inflammatory process. May regulate cell architecture and adhesion. The polypeptide is C2 calcium-dependent domain-containing protein 4A (C2CD4A) (Homo sapiens (Human)).